The chain runs to 550 residues: DNA gyrase subunit A (550 aa).

The Topo IIA-type catalytic domain occupies 1 to 550 (FRPDRSHAKS…GMATNIPPHN (550 aa)). Tyr-66 (O-(5'-phospho-DNA)-tyrosine intermediate) is an active-site residue. The region spanning 192–332 (LLGAFISEGF…VQQMLLEFGV (141 aa)) is the DOD-type homing endonuclease domain.

It belongs to the type II topoisomerase GyrA/ParC subunit family. As to quaternary structure, heterotetramer, composed of two GyrA and two GyrB chains. In the heterotetramer, GyrA contains the active site tyrosine that forms a transient covalent intermediate with DNA, while GyrB binds cofactors and catalyzes ATP hydrolysis. This protein undergoes a protein self splicing that involves a post-translational excision of the intervening region (intein) followed by peptide ligation.

It is found in the cytoplasm. The enzyme catalyses ATP-dependent breakage, passage and rejoining of double-stranded DNA.. A type II topoisomerase that negatively supercoils closed circular double-stranded (ds) DNA in an ATP-dependent manner to modulate DNA topology and maintain chromosomes in an underwound state. Negative supercoiling favors strand separation, and DNA replication, transcription, recombination and repair, all of which involve strand separation. Also able to catalyze the interconversion of other topological isomers of dsDNA rings, including catenanes and knotted rings. Type II topoisomerases break and join 2 DNA strands simultaneously in an ATP-dependent manner. The polypeptide is DNA gyrase subunit A (gyrA) (Mycobacterium gordonae).